Consider the following 494-residue polypeptide: 3-octaprenyl-4-hydroxybenzoate carboxy-lyase (494 aa).

A Mn(2+)-binding site is contributed by Asn172. Prenylated FMN is bound by residues 175-177 (IYR), 189-191 (RWL), and 194-195 (RG). Residue Glu238 coordinates Mn(2+). Residue Asp287 is the Proton donor of the active site.

Belongs to the UbiD family. In terms of assembly, homohexamer. Requires prenylated FMN as cofactor. It depends on Mn(2+) as a cofactor.

The protein resides in the cell membrane. It catalyses the reaction a 4-hydroxy-3-(all-trans-polyprenyl)benzoate + H(+) = a 2-(all-trans-polyprenyl)phenol + CO2. It functions in the pathway cofactor biosynthesis; ubiquinone biosynthesis. Its function is as follows. Catalyzes the decarboxylation of 3-octaprenyl-4-hydroxy benzoate to 2-octaprenylphenol, an intermediate step in ubiquinone biosynthesis. The polypeptide is 3-octaprenyl-4-hydroxybenzoate carboxy-lyase (Erwinia tasmaniensis (strain DSM 17950 / CFBP 7177 / CIP 109463 / NCPPB 4357 / Et1/99)).